Reading from the N-terminus, the 382-residue chain is MANNSNSGSELEVDDTLQSICYNRGSLKLLDQRKLPLETEFLDIRNSSDGWSAIREMVVRGAPAIAIAAALSLAVEVFNFDDFTGTSNDAASFLFKKLEYLVSSRPTAVNLSDAANKLKEVIYKAAATASDSNSVFQAYIEAAEIMLKDDIASNKAIGSHGASFIQNQLKNPQRLSILTHCNTGSLATAGYGTALGVIRALHAAGVLRRAYCTETRPFNQGSRLTAFELVHEKIPATLVADSAAAALMKDDQVSAVIVGADRVAANGDTANKIGTYSLALCAMHHNIPFYVAAPLTSVDLSLSSGKHIVIEERSPKELLNSRGGLGEQVAASGISVWNPAFDVTPANLISGIITEKGVITKIDSSDFDIKNFVKRTAGQSVA.

D261 acts as the Proton donor in catalysis.

The protein belongs to the eIF-2B alpha/beta/delta subunits family. MtnA subfamily.

It is found in the cytoplasm. Its subcellular location is the nucleus. The catalysed reaction is 5-(methylsulfanyl)-alpha-D-ribose 1-phosphate = 5-(methylsulfanyl)-D-ribulose 1-phosphate. The protein operates within amino-acid biosynthesis; L-methionine biosynthesis via salvage pathway; L-methionine from S-methyl-5-thio-alpha-D-ribose 1-phosphate: step 1/6. In terms of biological role, catalyzes the interconversion of methylthioribose-1-phosphate (MTR-1-P) into methylthioribulose-1-phosphate (MTRu-1-P). The protein is Methylthioribose-1-phosphate isomerase of Ricinus communis (Castor bean).